We begin with the raw amino-acid sequence, 533 residues long: Trigger factor (533 aa).

Residues G164 to T249 enclose the PPIase FKBP-type domain. Residues E436–K533 are disordered. Positions A465–A477 are enriched in basic residues. Positions A481–A490 are enriched in basic and acidic residues. Basic residues-rich tracts occupy residues A494 to T506 and P515 to K533.

This sequence belongs to the FKBP-type PPIase family. Tig subfamily.

Its subcellular location is the cytoplasm. The catalysed reaction is [protein]-peptidylproline (omega=180) = [protein]-peptidylproline (omega=0). In terms of biological role, involved in protein export. Acts as a chaperone by maintaining the newly synthesized protein in an open conformation. Functions as a peptidyl-prolyl cis-trans isomerase. In Erythrobacter litoralis (strain HTCC2594), this protein is Trigger factor.